We begin with the raw amino-acid sequence, 257 residues long: Transmembrane protein C257L (257 aa).

The next 2 helical transmembrane spans lie at 123 to 143 (LELL…FTAL) and 163 to 183 (MMIF…YVLV).

It belongs to the asfivirus C257R family.

The protein localises to the host membrane. It localises to the virion. In African swine fever virus (strain Badajoz 1971 Vero-adapted) (Ba71V), this protein is Transmembrane protein C257L.